The chain runs to 691 residues: Hormonally up-regulated neu tumor-associated kinase homolog A (691 aa).

Residues 55–313 enclose the Protein kinase domain; that stretch reads YLIGRKLGEG…IQQALANRWL (259 aa). ATP is bound by residues 61-69 and Lys-84; that span reads LGEGSFAKV. Asp-179 serves as the catalytic Proton acceptor. Positions 406–425 are enriched in basic and acidic residues; the sequence is MNKNSYEERRSKDLEKRGEP. 4 disordered regions span residues 406-475, 499-518, 580-640, and 655-679; these read MNKN…GGLS, QSPDPRTPKIMRRQDSHSQE, FQFD…SRGR, and QVVSPKGEKPLETRMPPLHQMSPGY. Residues 440 to 453 are compositionally biased toward polar residues; sequence SHRQNACLTPQGHS. Residues 457-470 are compositionally biased toward basic and acidic residues; the sequence is PVKERRSSKSERES. Residues 582–597 show a composition bias toward polar residues; sequence FDNTSPSKSHFNQASF. Residues 604–620 show a composition bias toward low complexity; the sequence is SPSSPESMSPTSPHSPS. Positions 621–631 are enriched in polar residues; it reads CNNNISGNLGS.

Belongs to the protein kinase superfamily. CAMK Ser/Thr protein kinase family. SNF1 subfamily.

It carries out the reaction L-seryl-[protein] + ATP = O-phospho-L-seryl-[protein] + ADP + H(+). The enzyme catalyses L-threonyl-[protein] + ATP = O-phospho-L-threonyl-[protein] + ADP + H(+). The protein is Hormonally up-regulated neu tumor-associated kinase homolog A (hunk-a) of Xenopus laevis (African clawed frog).